The chain runs to 1219 residues: Protein jagged-1 (1219 aa).

An N-terminal signal peptide occupies residues 1-33 (MRSPRTRGRPGRPLSLLLALLCALRAKVCGASG). The Extracellular segment spans residues 34 to 1067 (QFELEILSMQ…QRRPLKNRTD (1034 aa)). Residue N143 is glycosylated (N-linked (GlcNAc...) asparagine). The 45-residue stretch at 185 to 229 (VTCDDHYYGFGCNKFCRPRDDFFGHYACDQNGNKTCMEGWMGPEC) folds into the DSL domain. Cystine bridges form between C187-C196 and C200-C212. The important for interaction with NOTCH1 stretch occupies residues 199-207 (FCRPRDDFF). N-linked (GlcNAc...) asparagine glycosylation is present at N217. Disulfide bonds link C220–C229, C234–C245, C238–C251, C253–C262, C265–C276, C271–C282, C284–C293, C300–C312, C306–C322, C324–C333, C340–C351, C345–C360, C362–C371, C378–C389, C383–C398, C400–C409, C416–C427, C421–C436, C438–C447, C454–C464, C458–C473, C475–C484, C491–C502, C496–C511, C513–C522, C529–C540, C534–C549, C551–C560, C578–C605, C599–C615, C617–C626, C633–C644, C638–C653, C655–C664, C671–C682, C676–C691, C693–C702, C709–C720, C714–C729, and C731–C740. The EGF-like 1 domain maps to 230 to 263 (NKAICRQGCSPKHGSCKLPGDCRCQYGWQGLYCD). Positions 264–294 (KCIPHPGCVHGTCNEPWQCLCETNWGGQLCD) constitute an EGF-like 2; atypical domain. 2 consecutive EGF-like domains span residues 296-334 (DLNY…PNCE) and 336-372 (AEHA…PTCS). Residues 374-410 (NIDDCSPNNCSHGGTCQDLVNGFKCVCPPQWTGKTCQ) enclose the EGF-like 5; calcium-binding domain. An N-linked (GlcNAc...) asparagine glycan is attached at N382. Residues 412–448 (DANECEAKPCVNARSCKNLIASYYCDCLPGWMGQNCD) enclose the EGF-like 6; calcium-binding domain. The region spanning 450-485 (NINDCLGQCQNDASCRDLVNGYRCICPPGYAGDHCE) is the EGF-like 7; calcium-binding domain. An EGF-like 8; calcium-binding domain is found at 487-523 (DIDECASNPCLNGGHCQNEINRFQCLCPTGFSGNLCQ). 2 consecutive EGF-like domains span residues 525 to 561 (DIDY…KNCS) and 586 to 627 (DTPE…TYCH). N559 is a glycosylation site (N-linked (GlcNAc...) asparagine). The region spanning 629–665 (NINDCEGNPCTNGGTCIDGVNSYKCICSDGWEGAHCE) is the EGF-like 11; calcium-binding domain. Residues 667–703 (NINDCSQNPCHYGGTCRDLVNDFYCDCKNGWKGKTCH) enclose the EGF-like 12; calcium-binding domain. 2 EGF-like domains span residues 705–741 (RDSQ…TTCN) and 744–780 (RNSS…PICT). N745 is a glycosylation site (N-linked (GlcNAc...) asparagine). 11 disulfide bridges follow: C748/C759, C753/C768, C770/C779, C786/C797, C791/C806, C808/C817, C824/C835, C829/C844, C846/C855, C925/C936, and C948/C958. The EGF-like 15; calcium-binding domain maps to 782–818 (NTNDCSPHPCYNSGTCVDGDNWYRCECAPGFAGPDCR). In terms of domain architecture, EGF-like 16; calcium-binding spans 820 to 856 (NINECQSSPCAFGATCVDEINGYQCICPPGHSGAKCH). Residues N960, N991, N1045, and N1064 are each glycosylated (N-linked (GlcNAc...) asparagine). Residues 1068 to 1093 (FLVPLLSSVLTVAWVCCLVTAFYWCV) form a helical membrane-spanning segment. Topologically, residues 1094 to 1219 (RKRRRKPSSH…QSLNRMEYIV (126 aa)) are cytoplasmic. A disordered region spans residues 1182 to 1219 (REEKVPQRTPTKHPNWTNKQDNRDLESAQSLNRMEYIV). Over residues 1189–1200 (RTPTKHPNWTNK) the composition is skewed to polar residues.

In terms of assembly, interacts with NOTCH1. Interacts with NOTCH2 and NOTCH3. In terms of tissue distribution, widely expressed in a variety of tissues.

The protein localises to the membrane. It localises to the cell membrane. Functionally, ligand for multiple Notch receptors and involved in the mediation of Notch signaling. May be involved in cell-fate decisions during hematopoiesis. Enhances fibroblast growth factor-induced angiogenesis (in vitro). Seems to be involved in early and late stages of mammalian cardiovascular development. Inhibits myoblast differentiation. May regulate fibroblast growth factor-induced angiogenesis. The sequence is that of Protein jagged-1 (Jag1) from Rattus norvegicus (Rat).